Consider the following 557-residue polypeptide: 2-succinyl-5-enolpyruvyl-6-hydroxy-3-cyclohexene-1-carboxylate synthase (557 aa).

The protein belongs to the TPP enzyme family. MenD subfamily. In terms of assembly, homodimer. Requires Mg(2+) as cofactor. The cofactor is Mn(2+). Thiamine diphosphate serves as cofactor.

The catalysed reaction is isochorismate + 2-oxoglutarate + H(+) = 5-enolpyruvoyl-6-hydroxy-2-succinyl-cyclohex-3-ene-1-carboxylate + CO2. It functions in the pathway quinol/quinone metabolism; 1,4-dihydroxy-2-naphthoate biosynthesis; 1,4-dihydroxy-2-naphthoate from chorismate: step 2/7. The protein operates within quinol/quinone metabolism; menaquinone biosynthesis. Catalyzes the thiamine diphosphate-dependent decarboxylation of 2-oxoglutarate and the subsequent addition of the resulting succinic semialdehyde-thiamine pyrophosphate anion to isochorismate to yield 2-succinyl-5-enolpyruvyl-6-hydroxy-3-cyclohexene-1-carboxylate (SEPHCHC). The protein is 2-succinyl-5-enolpyruvyl-6-hydroxy-3-cyclohexene-1-carboxylate synthase of Staphylococcus aureus (strain bovine RF122 / ET3-1).